The chain runs to 203 residues: WUSCHEL-related homeobox 3 (203 aa).

Residues Thr-4–Leu-68 constitute a DNA-binding region (homeobox; WUS-type). Disordered stretches follow at residues Cys-73 to Ala-95, Leu-109 to Gln-135, and Ser-180 to Asn-203. Residues Pro-80 to Pro-91 are compositionally biased toward pro residues. The span at Leu-109–Pro-118 shows a compositional bias: basic residues. 2 stretches are compositionally biased toward low complexity: residues Tyr-119–Gln-135 and Cys-190–Asn-203.

The protein belongs to the WUS homeobox family.

The protein localises to the nucleus. Functionally, transcription factor which may be involved in developmental processes. The polypeptide is WUSCHEL-related homeobox 3 (WOX3) (Oryza sativa subsp. indica (Rice)).